Here is a 163-residue protein sequence, read N- to C-terminus: Small ribosomal subunit protein uS7 (163 aa).

Belongs to the universal ribosomal protein uS7 family. As to quaternary structure, part of the 30S ribosomal subunit. Contacts proteins S9 and S11.

In terms of biological role, one of the primary rRNA binding proteins, it binds directly to 16S rRNA where it nucleates assembly of the head domain of the 30S subunit. Is located at the subunit interface close to the decoding center, probably blocks exit of the E-site tRNA. In Rickettsia bellii (strain RML369-C), this protein is Small ribosomal subunit protein uS7.